Here is a 287-residue protein sequence, read N- to C-terminus: Shikimate dehydrogenase (NADP(+)) (287 aa).

Shikimate is bound by residues 20-22 (SRS) and threonine 67. Lysine 71 (proton acceptor) is an active-site residue. Position 84 (glutamate 84) interacts with NADP(+). Shikimate-binding residues include asparagine 93 and aspartate 108. Residues 132-136 (GAGGA), 156-161 (NRTAAR), and methionine 226 each bind NADP(+). Tyrosine 228 is a shikimate binding site. Glycine 250 contacts NADP(+).

This sequence belongs to the shikimate dehydrogenase family. In terms of assembly, homodimer.

It carries out the reaction shikimate + NADP(+) = 3-dehydroshikimate + NADPH + H(+). It participates in metabolic intermediate biosynthesis; chorismate biosynthesis; chorismate from D-erythrose 4-phosphate and phosphoenolpyruvate: step 4/7. Its function is as follows. Involved in the biosynthesis of the chorismate, which leads to the biosynthesis of aromatic amino acids. Catalyzes the reversible NADPH linked reduction of 3-dehydroshikimate (DHSA) to yield shikimate (SA). The sequence is that of Shikimate dehydrogenase (NADP(+)) from Bordetella pertussis (strain Tohama I / ATCC BAA-589 / NCTC 13251).